The primary structure comprises 1154 residues: uncharacterized protein (1154 aa).

A signal peptide spans Met-1–Ser-18. Cys-19 carries the N-palmitoyl cysteine lipid modification. Cys-19 carries the S-diacylglycerol cysteine lipid modification. Transmembrane regions (helical) follow at residues Ile-288–Gly-308, Leu-394–Phe-414, Ala-423–Phe-443, and Ile-458–Ile-478.

The protein belongs to the TrbL/VirB6 family.

It is found in the cell membrane. This is an uncharacterized protein from Rickettsia typhi (strain ATCC VR-144 / Wilmington).